Consider the following 864-residue polypeptide: Alanine--tRNA ligase (864 aa).

Zn(2+)-binding residues include H534, H538, C639, and H643.

The protein belongs to the class-II aminoacyl-tRNA synthetase family. Zn(2+) is required as a cofactor.

The protein resides in the cytoplasm. The enzyme catalyses tRNA(Ala) + L-alanine + ATP = L-alanyl-tRNA(Ala) + AMP + diphosphate. In terms of biological role, catalyzes the attachment of alanine to tRNA(Ala) in a two-step reaction: alanine is first activated by ATP to form Ala-AMP and then transferred to the acceptor end of tRNA(Ala). Also edits incorrectly charged Ser-tRNA(Ala) and Gly-tRNA(Ala) via its editing domain. The polypeptide is Alanine--tRNA ligase (Aster yellows witches'-broom phytoplasma (strain AYWB)).